Reading from the N-terminus, the 412-residue chain is Hyaluronidase-3 (412 aa).

A signal peptide spans 1-22; the sequence is MIMHLGLMMVVGLTLCLMHGQA. 5 disulfides stabilise this stretch: C42–C332, C206–C221, C357–C368, C362–C396, and C398–C407. N69 carries N-linked (GlcNAc...) asparagine glycosylation. E129 (proton donor) is an active-site residue. A glycan (N-linked (GlcNAc...) asparagine) is linked at N216. The EGF-like domain maps to 353–408; sequence AAMACSHQRCHGHGRCARKDPGQMEAFLHLQPDDSLGAWNSFRCHCYSGWAGPTCL.

This sequence belongs to the glycosyl hydrolase 56 family. In terms of processing, N-glycosylated. Expressed in testis, epididymal tissue, epididymal luminal fluid (ELF), acrosome-intact (AI) sperm and caput (CAP), corpus (COR) and caudal (CAU) sperm. Higher expression in sperm than testis (at protein level). Liver, kidney, skin, brain, stomach and testis. Expressed mainly in granulosa cells of the ovaries. Expressed in small and large antral follicles. Not present in theca or stroma cells. Expressed in testis and liver. Expressed in testis and CAP, COR, and CAU epididymis tissue.

The protein resides in the secreted. It is found in the cell membrane. Its subcellular location is the cytoplasmic vesicle. The protein localises to the secretory vesicle. It localises to the acrosome. The protein resides in the endoplasmic reticulum. It is found in the early endosome. The enzyme catalyses Random hydrolysis of (1-&gt;4)-linkages between N-acetyl-beta-D-glucosamine and D-glucuronate residues in hyaluronate.. Functionally, facilitates sperm penetration into the layer of cumulus cells surrounding the egg by digesting hyaluronic acid. Involved in induction of the acrosome reaction in the sperm. Involved in follicular atresia, the breakdown of immature ovarian follicles that are not selected to ovulate. Induces ovarian granulosa cell apoptosis, possibly via apoptotic signaling pathway involving CASP8 and CASP3 activation, and poly(ADP-ribose) polymerase (PARP) cleavage. Has no hyaluronidase activity in embryonic fibroblasts in vitro. Has no hyaluronidase activity in granulosa cells in vitro. The sequence is that of Hyaluronidase-3 (Hyal3) from Mus musculus (Mouse).